We begin with the raw amino-acid sequence, 379 residues long: Anhydro-N-acetylmuramic acid kinase (379 aa).

9 to 16 contributes to the ATP binding site; it reads GTSADGVD.

Belongs to the anhydro-N-acetylmuramic acid kinase family.

It carries out the reaction 1,6-anhydro-N-acetyl-beta-muramate + ATP + H2O = N-acetyl-D-muramate 6-phosphate + ADP + H(+). Its pathway is amino-sugar metabolism; 1,6-anhydro-N-acetylmuramate degradation. It functions in the pathway cell wall biogenesis; peptidoglycan recycling. Catalyzes the specific phosphorylation of 1,6-anhydro-N-acetylmuramic acid (anhMurNAc) with the simultaneous cleavage of the 1,6-anhydro ring, generating MurNAc-6-P. Is required for the utilization of anhMurNAc either imported from the medium or derived from its own cell wall murein, and thus plays a role in cell wall recycling. The polypeptide is Anhydro-N-acetylmuramic acid kinase (Prochlorococcus marinus (strain MIT 9211)).